Reading from the N-terminus, the 548-residue chain is Chaperone Ric-8A (548 aa).

Disordered stretches follow at residues 443 to 484 (DPGH…EGMT) and 517 to 548 (GKMT…SDTN).

It belongs to the synembryn family.

The protein resides in the cytoplasm. The protein localises to the cell cortex. In terms of biological role, chaperone that specifically binds and folds nascent G alpha proteins prior to G protein heterotrimer formation, promoting their stability and activity: folds GNAI1, GNAO1, GNA13 and GNAQ. Does not fold G(s) G-alpha proteins GNAS nor GNAL. Also acts as a guanine nucleotide exchange factor (GEF) for G alpha proteins by stimulating exchange of bound GDP for free GTP. The polypeptide is Chaperone Ric-8A (ric8a) (Danio rerio (Zebrafish)).